Reading from the N-terminus, the 138-residue chain is Transcription antitermination protein NusB (138 aa).

It belongs to the NusB family.

In terms of biological role, involved in transcription antitermination. Required for transcription of ribosomal RNA (rRNA) genes. Binds specifically to the boxA antiterminator sequence of the ribosomal RNA (rrn) operons. In Yersinia pseudotuberculosis serotype O:1b (strain IP 31758), this protein is Transcription antitermination protein NusB.